Consider the following 376-residue polypeptide: Succinyl-diaminopimelate desuccinylase (376 aa).

H67 provides a ligand contact to Zn(2+). The active site involves D69. D100 provides a ligand contact to Zn(2+). The Proton acceptor role is filled by E134. Zn(2+) contacts are provided by E135, E163, and H349.

The protein belongs to the peptidase M20A family. DapE subfamily. In terms of assembly, homodimer. Zn(2+) serves as cofactor. The cofactor is Co(2+).

The enzyme catalyses N-succinyl-(2S,6S)-2,6-diaminopimelate + H2O = (2S,6S)-2,6-diaminopimelate + succinate. It functions in the pathway amino-acid biosynthesis; L-lysine biosynthesis via DAP pathway; LL-2,6-diaminopimelate from (S)-tetrahydrodipicolinate (succinylase route): step 3/3. Its function is as follows. Catalyzes the hydrolysis of N-succinyl-L,L-diaminopimelic acid (SDAP), forming succinate and LL-2,6-diaminopimelate (DAP), an intermediate involved in the bacterial biosynthesis of lysine and meso-diaminopimelic acid, an essential component of bacterial cell walls. This is Succinyl-diaminopimelate desuccinylase from Haemophilus ducreyi (strain 35000HP / ATCC 700724).